Reading from the N-terminus, the 270-residue chain is Protein FAM110D (270 aa).

Low complexity predominate over residues 1–16 (MLLASPSTPSRGRTPS). Disordered stretches follow at residues 1-83 (MLLA…RPDS), 117-142 (RDVA…PQDA), and 186-244 (PQSW…QVSV). Positions 68-78 (RPARRGSGRRL) are enriched in basic residues.

It belongs to the FAM110 family.

The protein is Protein FAM110D (FAM110D) of Bos taurus (Bovine).